Reading from the N-terminus, the 366-residue chain is DNA polymerase IV (366 aa).

Residues 6–197 enclose the UmuC domain; sequence IIHVDMDYFY…LKVSKLWGIG (192 aa). Residues Asp10 and Asp114 each contribute to the Mg(2+) site. Residue Glu115 is part of the active site.

Belongs to the DNA polymerase type-Y family. In terms of assembly, monomer. Mg(2+) is required as a cofactor.

It is found in the cytoplasm. The catalysed reaction is DNA(n) + a 2'-deoxyribonucleoside 5'-triphosphate = DNA(n+1) + diphosphate. In terms of biological role, poorly processive, error-prone DNA polymerase involved in untargeted mutagenesis. Copies undamaged DNA at stalled replication forks, which arise in vivo from mismatched or misaligned primer ends. These misaligned primers can be extended by PolIV. Exhibits no 3'-5' exonuclease (proofreading) activity. May be involved in translesional synthesis. The sequence is that of DNA polymerase IV from Methanosarcina acetivorans (strain ATCC 35395 / DSM 2834 / JCM 12185 / C2A).